Here is a 907-residue protein sequence, read N- to C-terminus: Probable ubiquitin-conjugating enzyme E2 24 (907 aa).

2 disordered regions span residues 1–23 and 485–509; these read MEMS…EHEE and SSTV…EASS. Residues 495–509 are compositionally biased toward polar residues; the sequence is QDLSQKISQSDEASS. Residues 662 to 822 enclose the UBC core domain; that stretch reads SWVKKVQQEW…AFLITCKSMI (161 aa). Cys748 functions as the Glycyl thioester intermediate in the catalytic mechanism.

Belongs to the ubiquitin-conjugating enzyme family. In terms of assembly, interacts with PHO1. Interacts with NLA. In terms of tissue distribution, expressed in the vascular tissues of cotyledons, leaves, roots, sepals, filaments, anthers and junctions between the inflorescence stems and siliques.

The protein resides in the golgi apparatus membrane. It localises to the endoplasmic reticulum membrane. It carries out the reaction S-ubiquitinyl-[E1 ubiquitin-activating enzyme]-L-cysteine + [E2 ubiquitin-conjugating enzyme]-L-cysteine = [E1 ubiquitin-activating enzyme]-L-cysteine + S-ubiquitinyl-[E2 ubiquitin-conjugating enzyme]-L-cysteine.. It functions in the pathway protein modification; protein ubiquitination. In terms of biological role, E2 ubiquitin-protein ligase that mediates E1-dependent protein ubiquitination. Mediates PHO1 degradation through multivesicular body-mediated vacuolar proteolysis in response to inorganic phosphate (Pi) availability. Negatively regulates the protein abundance of PHF1 and PHT1s under Pi-sufficient conditions by facilitating the degradation of PHT1 proteins at the endomembrane. Functions cooperatively with NLA to regulate the abundance of the inorganic phosphate (Pi) transporters PHT1-1, PHT1-2 and PHT1-3 in different subcellular compartments. Regulates Pi homeostasis by mediating, cooperatively with NLA, polyubiquitination of PHT1-4 and its targeting for degradation. This Arabidopsis thaliana (Mouse-ear cress) protein is Probable ubiquitin-conjugating enzyme E2 24.